A 104-amino-acid chain; its full sequence is Inner membrane protein YjeO (104 aa).

At 1-5 (MSARM) the chain is on the cytoplasmic side. The chain crosses the membrane as a helical span at residues 6–26 (FVLCCIWFIVAFLWITITSAL). Residues 27-52 (DKEWMIDGRGINNVCDVLMYLEEDDT) lie on the Periplasmic side of the membrane. The helical transmembrane segment at 53-73 (RDVGVIMTLPLFFPFLWFALW) threads the bilayer. Over 74–77 (RKKR) the chain is Cytoplasmic. The chain crosses the membrane as a helical span at residues 78–98 (GWFMYATALAIFGYWLWQFFL). At 99 to 104 (RYQFCL) the chain is on the periplasmic side.

The protein resides in the cell inner membrane. This is Inner membrane protein YjeO (yjeO) from Escherichia coli (strain K12).